Here is a 128-residue protein sequence, read N- to C-terminus: Large ribosomal subunit protein bL20 (128 aa).

The protein belongs to the bacterial ribosomal protein bL20 family.

Its function is as follows. Binds directly to 23S ribosomal RNA and is necessary for the in vitro assembly process of the 50S ribosomal subunit. It is not involved in the protein synthesizing functions of that subunit. The polypeptide is Large ribosomal subunit protein bL20 (Kocuria rhizophila (strain ATCC 9341 / DSM 348 / NBRC 103217 / DC2201)).